Consider the following 208-residue polypeptide: Probable GTP-binding protein EngB (208 aa).

In terms of domain architecture, EngB-type G spans 23-205; the sequence is LTSEMVILGR…RQTLLKYLLT (183 aa). GTP-binding positions include 31 to 38, 57 to 61, 84 to 87, 154 to 157, and 182 to 184; these read GRSNVGKS, GKTRL, DLPG, TKFD, and FNA. The Mg(2+) site is built by Ser-38 and Thr-59.

Belongs to the TRAFAC class TrmE-Era-EngA-EngB-Septin-like GTPase superfamily. EngB GTPase family. Mg(2+) serves as cofactor.

Necessary for normal cell division and for the maintenance of normal septation. The sequence is that of Probable GTP-binding protein EngB from Helicobacter pylori (strain G27).